A 630-amino-acid polypeptide reads, in one-letter code: Prolactin receptor (630 aa).

Positions Met1–Gly23 are cleaved as a signal peptide. Topologically, residues Thr24 to Glu234 are extracellular. 2 consecutive Fibronectin type-III domains span residues Lys31–Pro128 and Pro130–Tyr230. Disulfide bonds link Cys37–Cys47 and Cys76–Cys87. 2 N-linked (GlcNAc...) asparagine glycosylation sites follow: Asn92 and Asn101. The Zn(2+) site is built by Asp212 and His213. The WSXWS motif motif lies at Trp216–Ser220. A helical membrane pass occupies residues Lys235–Met258. Over Asn259–Thr630 the chain is Cytoplasmic. The short motif at Met267–Lys275 is the Box 1 motif element. Residues Lys339–Lys389 form a disordered region. The segment covering Ser340–Asp357 has biased composition (low complexity). Residues Gln380–Lys389 show a composition bias toward basic and acidic residues.

Belongs to the type I cytokine receptor family. Type 1 subfamily.

The protein localises to the membrane. In terms of biological role, this is a receptor for the anterior pituitary hormone prolactin. In Oreochromis niloticus (Nile tilapia), this protein is Prolactin receptor (prlr).